Here is a 60-residue protein sequence, read N- to C-terminus: UPF0434 protein YcaR (60 aa).

This sequence belongs to the UPF0434 family.

This chain is UPF0434 protein YcaR, found in Salmonella agona (strain SL483).